A 504-amino-acid chain; its full sequence is L-amino-acid oxidase (504 aa).

Residues 1–18 (MNVFFMFSLLFLAALGSC) form the signal peptide. Cysteines 28 and 191 form a disulfide. Residues 61-62 (MS), 81-82 (EA), arginine 89, and 105-108 (GPMR) each bind FAD. Arginine 108 contacts substrate. Asparagine 190 is a glycosylation site (N-linked (GlcNAc...) asparagine). Histidine 241 serves as a coordination point for substrate. An FAD-binding site is contributed by valine 279. The cysteines at positions 349 and 430 are disulfide-linked. A glycan (N-linked (GlcNAc...) asparagine) is linked at asparagine 379. Tyrosine 390 is a substrate binding site. FAD contacts are provided by residues glutamate 475 and 482–487 (GWIDST). Residue 482–483 (GW) participates in substrate binding.

It belongs to the flavin monoamine oxidase family. FIG1 subfamily. As to quaternary structure, homodimer; non-covalently linked. FAD serves as cofactor. In terms of tissue distribution, expressed by the venom gland.

The protein resides in the secreted. It carries out the reaction an L-alpha-amino acid + O2 + H2O = a 2-oxocarboxylate + H2O2 + NH4(+). The catalysed reaction is L-leucine + O2 + H2O = 4-methyl-2-oxopentanoate + H2O2 + NH4(+). In terms of biological role, catalyzes an oxidative deamination of predominantly hydrophobic and aromatic L-amino acids, thus producing hydrogen peroxide that may contribute to the diverse toxic effects of this enzyme. Shows activity on L-Leu. Exhibits diverse biological activities, such as hemorrhage, hemolysis, edema, antibacterial and antiparasitic activities, as well as regulation of platelet aggregation. Its effect on platelets is controversial, since it either induces aggregation or inhibits agonist-induced aggregation. These different effects are probably due to different experimental conditions. This protein induces apoptosis of cultured HeLa cells. In Gloydius halys (Chinese water mocassin), this protein is L-amino-acid oxidase.